We begin with the raw amino-acid sequence, 576 residues long: Aspartate--tRNA ligase (576 aa).

Glutamate 171 is an L-aspartate binding site. Residues 195-198 (QLFK) are aspartate. An L-aspartate-binding site is contributed by arginine 217. ATP contacts are provided by residues 217–219 (RDE) and glutamine 226. An L-aspartate-binding site is contributed by histidine 450. ATP is bound at residue glutamate 484. Residue arginine 491 coordinates L-aspartate. 536-539 (GLDR) provides a ligand contact to ATP.

It belongs to the class-II aminoacyl-tRNA synthetase family. Type 1 subfamily. As to quaternary structure, homodimer.

Its subcellular location is the cytoplasm. It catalyses the reaction tRNA(Asp) + L-aspartate + ATP = L-aspartyl-tRNA(Asp) + AMP + diphosphate. Catalyzes the attachment of L-aspartate to tRNA(Asp) in a two-step reaction: L-aspartate is first activated by ATP to form Asp-AMP and then transferred to the acceptor end of tRNA(Asp). This Buchnera aphidicola subsp. Baizongia pistaciae (strain Bp) protein is Aspartate--tRNA ligase.